A 283-amino-acid chain; its full sequence is tRNA pseudouridine synthase B (283 aa).

The active-site Nucleophile is Asp38.

This sequence belongs to the pseudouridine synthase TruB family. Type 1 subfamily.

The enzyme catalyses uridine(55) in tRNA = pseudouridine(55) in tRNA. Responsible for synthesis of pseudouridine from uracil-55 in the psi GC loop of transfer RNAs. This is tRNA pseudouridine synthase B from Aster yellows witches'-broom phytoplasma (strain AYWB).